We begin with the raw amino-acid sequence, 783 residues long: Centrosomal protein of 89 kDa (783 aa).

A disordered region spans residues 28 to 49 (PKAAVPRTPPPRSPNPSPERPR). The span at 34-45 (RTPPPRSPNPSP) shows a compositional bias: pro residues. S50 bears the Phosphoserine mark. Disordered stretches follow at residues 63–157 (GRTV…DDLY) and 176–226 (DENI…DITG). The segment covering 94-107 (ATTSQLRPRPNWQS) has biased composition (polar residues). 2 stretches are compositionally biased toward basic and acidic residues: residues 139–155 (ELGD…HSDD) and 196–214 (QQKD…KPPL). Coiled-coil stretches lie at residues 234–333 (EITR…SRYQ) and 369–719 (LLLA…GELE).

Its subcellular location is the cytoplasm. The protein resides in the cytosol. The protein localises to the cytoskeleton. It localises to the microtubule organizing center. It is found in the centrosome. Its subcellular location is the spindle pole. The protein resides in the centriole. The protein localises to the mitochondrion intermembrane space. Its function is as follows. Required for ciliogenesis. Also plays a role in mitochondrial metabolism where it may modulate complex IV activity. The sequence is that of Centrosomal protein of 89 kDa (CEP89) from Homo sapiens (Human).